The primary structure comprises 119 residues: Microtubule nucleation factor SSNA1 (119 aa).

An N-acetylthreonine modification is found at Thr2. The segment at 2–32 (TQQGAALQNYNNELVKCIEELCQKREELCRQ) is important for localization to the centrosome. A coiled-coil region spans residues 13–70 (NELVKCIEELCQKREELCRQIQEEEDEKQRLQNEVRQLTEKLARVNENLARKIASRNE).

Belongs to the SSNA1 family. Self-associates to form fibrils. Also forms dimers as well as monomers. Interacts with SPAST. As to expression, widely expressed.

It is found in the nucleus. The protein resides in the cytoplasm. The protein localises to the cytoskeleton. Its subcellular location is the microtubule organizing center. It localises to the centrosome. It is found in the centriole. The protein resides in the midbody. The protein localises to the flagellum basal body. Its subcellular location is the flagellum axoneme. It localises to the cell projection. It is found in the axon. Functionally, microtubule-binding protein which stabilizes dynamic microtubules by slowing growth and shrinkage at both plus and minus ends and serves as a sensor of microtubule damage, protecting microtubules from the microtubule-severing enzyme SPAST. Induces microtubule branching which is mediated by the formation of long SSNA1 fibrils which guide microtubule protofilaments to split apart from the mother microtubule and form daughter microtubules. Plays a role in axon outgrowth and branching. Required for cell division. This is Microtubule nucleation factor SSNA1 from Homo sapiens (Human).